The primary structure comprises 352 residues: Heat-inducible transcription repressor HrcA (352 aa).

It belongs to the HrcA family.

Functionally, negative regulator of class I heat shock genes (grpE-dnaK-dnaJ and groELS operons). Prevents heat-shock induction of these operons. The sequence is that of Heat-inducible transcription repressor HrcA from Lactobacillus gasseri (strain ATCC 33323 / DSM 20243 / BCRC 14619 / CIP 102991 / JCM 1131 / KCTC 3163 / NCIMB 11718 / NCTC 13722 / AM63).